Reading from the N-terminus, the 955-residue chain is Serine-aspartate repeat-containing protein C (955 aa).

Residues 1 to 50 (MNNKKTVTNRKGMIPNRLNKFSIRKYSVGTASILVGTTLIFGLSGHEAKA) form the signal peptide. A disordered region spans residues 51–166 (AEHTNGELNQ…TPKTTTIKPR (116 aa)). The interval 51–495 (AEHTNGELNQ…GSSTANGDQK (445 aa)) is ligand binding A region. The segment covering 56–71 (GELNQSKNETTAPSEN) has biased composition (polar residues). The segment covering 72-83 (KTTEKVDSHQLK) has biased composition (basic and acidic residues). The span at 84 to 114 (DNTQTATADQPKVTMSDSATFKETSSNMQSP) shows a compositional bias: polar residues. The span at 115-132 (QNATASQSTTQTSNVTTN) shows a compositional bias: low complexity. The segment covering 133-164 (DKSSTTYSNETDKSNLTQAKDVSATPKTTTIK) has biased composition (polar residues). 2 CNA-B domains span residues 496–606 (KYNL…YKTP) and 607–717 (KYSL…EEET). The tract at residues 678 to 935 (TQTGTNTTED…NNSNNGTLFG (258 aa)) is disordered. Composition is skewed to acidic residues over residues 685-695 (TEDDKDADGGE) and 712-894 (YYEE…DSDS). Positions 918–922 (LPETG) match the LPXTG sorting signal motif. Low complexity predominate over residues 920–935 (ETGSENNNSNNGTLFG). At Thr921 the chain carries Pentaglycyl murein peptidoglycan amidated threonine. Residues 922 to 955 (GSENNNSNNGTLFGGLFAALGSLLLFGRRKKQNK) constitute a propeptide, removed by sortase.

Belongs to the serine-aspartate repeat-containing protein (SDr) family. Homodimerizes; via N2-Domain. Interacts with host NRXN1; this interaction mediates bacterial attachment to host cells.

Its subcellular location is the secreted. The protein resides in the cell wall. Its function is as follows. Cell surface-associated calcium-binding protein which plays an important role in adhesion and pathogenesis. Mediates interactions with components of the extracellular matrix such as host NRXN1 to promote bacterial adhesion. The polypeptide is Serine-aspartate repeat-containing protein C (sdrC) (Staphylococcus aureus (strain MW2)).